A 257-amino-acid polypeptide reads, in one-letter code: 5'-nucleotidase SurE (257 aa).

Asp9, Asp10, Ser42, and Asn96 together coordinate a divalent metal cation.

The protein belongs to the SurE nucleotidase family. A divalent metal cation serves as cofactor.

Its subcellular location is the cytoplasm. The enzyme catalyses a ribonucleoside 5'-phosphate + H2O = a ribonucleoside + phosphate. Functionally, nucleotidase that shows phosphatase activity on nucleoside 5'-monophosphates. The sequence is that of 5'-nucleotidase SurE from Campylobacter lari (strain RM2100 / D67 / ATCC BAA-1060).